Reading from the N-terminus, the 491-residue chain is UDP-N-acetylmuramate--L-alanine ligase (491 aa).

115–121 is an ATP binding site; that stretch reads GTHGKTT.

The protein belongs to the MurCDEF family.

The protein localises to the cytoplasm. The enzyme catalyses UDP-N-acetyl-alpha-D-muramate + L-alanine + ATP = UDP-N-acetyl-alpha-D-muramoyl-L-alanine + ADP + phosphate + H(+). The protein operates within cell wall biogenesis; peptidoglycan biosynthesis. In terms of biological role, cell wall formation. The chain is UDP-N-acetylmuramate--L-alanine ligase from Parvibaculum lavamentivorans (strain DS-1 / DSM 13023 / NCIMB 13966).